The sequence spans 101 residues: NADH-quinone oxidoreductase subunit K (101 aa).

The next 3 helical transmembrane spans lie at 4-24 (LGHY…GIFL), 30-50 (IVLL…FVAF), and 61-81 (VFVF…LAIL).

Belongs to the complex I subunit 4L family. NDH-1 is composed of 14 different subunits. Subunits NuoA, H, J, K, L, M, N constitute the membrane sector of the complex.

The protein localises to the cell inner membrane. The catalysed reaction is a quinone + NADH + 5 H(+)(in) = a quinol + NAD(+) + 4 H(+)(out). NDH-1 shuttles electrons from NADH, via FMN and iron-sulfur (Fe-S) centers, to quinones in the respiratory chain. The immediate electron acceptor for the enzyme in this species is believed to be ubiquinone. Couples the redox reaction to proton translocation (for every two electrons transferred, four hydrogen ions are translocated across the cytoplasmic membrane), and thus conserves the redox energy in a proton gradient. This Leptothrix cholodnii (strain ATCC 51168 / LMG 8142 / SP-6) (Leptothrix discophora (strain SP-6)) protein is NADH-quinone oxidoreductase subunit K.